The sequence spans 785 residues: Phenylalanine--tRNA ligase beta subunit (785 aa).

Positions 39–150 (RTWAAGVVVG…ASLPLGLDVG (112 aa)) constitute a tRNA-binding domain. The B5 domain occupies 400–476 (RENRVVSLRP…RVVGYDRFAP (77 aa)). Asp-454, Asp-460, Glu-463, and Glu-464 together coordinate Mg(2+). The 93-residue stretch at 692–784 (SPFPPAARDL…LAERYSVDLR (93 aa)) folds into the FDX-ACB domain.

It belongs to the phenylalanyl-tRNA synthetase beta subunit family. Type 1 subfamily. Tetramer of two alpha and two beta subunits. It depends on Mg(2+) as a cofactor.

It is found in the cytoplasm. It carries out the reaction tRNA(Phe) + L-phenylalanine + ATP = L-phenylalanyl-tRNA(Phe) + AMP + diphosphate + H(+). The protein is Phenylalanine--tRNA ligase beta subunit of Gloeobacter violaceus (strain ATCC 29082 / PCC 7421).